Here is a 313-residue protein sequence, read N- to C-terminus: Protoheme IX farnesyltransferase (313 aa).

8 helical membrane passes run 32–52 (VMSLVVFTALVGMLLAPGDFH), 53–73 (PVLAVTAMLCIAVGGGAAGAL), 120–140 (VLVNWIAAALLAFTIFFYVVI), 153–173 (IVIGGAAGALPPVVAWAAVTG), 180–200 (LLLFAIIFFWTPPHFWALALF), 226–246 (ILLYTIVLVAVAAAPWPLGYF), 248–268 (AVYGIASLALGGWMLVLAIRV), and 284–304 (LFKFSILYLFALFSILLIEVV).

This sequence belongs to the UbiA prenyltransferase family. Protoheme IX farnesyltransferase subfamily.

The protein localises to the cell inner membrane. The enzyme catalyses heme b + (2E,6E)-farnesyl diphosphate + H2O = Fe(II)-heme o + diphosphate. The protein operates within porphyrin-containing compound metabolism; heme O biosynthesis; heme O from protoheme: step 1/1. Functionally, converts heme B (protoheme IX) to heme O by substitution of the vinyl group on carbon 2 of heme B porphyrin ring with a hydroxyethyl farnesyl side group. This Rhodopseudomonas palustris (strain BisB5) protein is Protoheme IX farnesyltransferase.